We begin with the raw amino-acid sequence, 261 residues long: 1-(5-phosphoribosyl)-5-[(5-phosphoribosylamino)methylideneamino] imidazole-4-carboxamide isomerase (261 aa).

The active-site Proton acceptor is Asp8. Asp139 acts as the Proton donor in catalysis.

The protein belongs to the HisA/HisF family.

It is found in the cytoplasm. The catalysed reaction is 1-(5-phospho-beta-D-ribosyl)-5-[(5-phospho-beta-D-ribosylamino)methylideneamino]imidazole-4-carboxamide = 5-[(5-phospho-1-deoxy-D-ribulos-1-ylimino)methylamino]-1-(5-phospho-beta-D-ribosyl)imidazole-4-carboxamide. It participates in amino-acid biosynthesis; L-histidine biosynthesis; L-histidine from 5-phospho-alpha-D-ribose 1-diphosphate: step 4/9. This Janthinobacterium sp. (strain Marseille) (Minibacterium massiliensis) protein is 1-(5-phosphoribosyl)-5-[(5-phosphoribosylamino)methylideneamino] imidazole-4-carboxamide isomerase.